The chain runs to 121 residues: Large ribosomal subunit protein bL12 (121 aa).

It belongs to the bacterial ribosomal protein bL12 family. Homodimer. Part of the ribosomal stalk of the 50S ribosomal subunit. Forms a multimeric L10(L12)X complex, where L10 forms an elongated spine to which 2 to 4 L12 dimers bind in a sequential fashion. Binds GTP-bound translation factors.

In terms of biological role, forms part of the ribosomal stalk which helps the ribosome interact with GTP-bound translation factors. Is thus essential for accurate translation. The protein is Large ribosomal subunit protein bL12 of Leuconostoc mesenteroides subsp. mesenteroides (strain ATCC 8293 / DSM 20343 / BCRC 11652 / CCM 1803 / JCM 6124 / NCDO 523 / NBRC 100496 / NCIMB 8023 / NCTC 12954 / NRRL B-1118 / 37Y).